The sequence spans 291 residues: 4-hydroxy-tetrahydrodipicolinate synthase (291 aa).

Pyruvate is bound at residue Thr45. The active-site Proton donor/acceptor is Tyr133. Lys161 acts as the Schiff-base intermediate with substrate in catalysis. Ile203 serves as a coordination point for pyruvate.

The protein belongs to the DapA family. In terms of assembly, homotetramer; dimer of dimers.

Its subcellular location is the cytoplasm. The enzyme catalyses L-aspartate 4-semialdehyde + pyruvate = (2S,4S)-4-hydroxy-2,3,4,5-tetrahydrodipicolinate + H2O + H(+). The protein operates within amino-acid biosynthesis; L-lysine biosynthesis via DAP pathway; (S)-tetrahydrodipicolinate from L-aspartate: step 3/4. Its function is as follows. Catalyzes the condensation of (S)-aspartate-beta-semialdehyde [(S)-ASA] and pyruvate to 4-hydroxy-tetrahydrodipicolinate (HTPA). This Neisseria gonorrhoeae (strain ATCC 700825 / FA 1090) protein is 4-hydroxy-tetrahydrodipicolinate synthase.